Reading from the N-terminus, the 74-residue chain is Large ribosomal subunit protein bL31 (74 aa).

Zn(2+)-binding residues include Cys-16, Cys-18, Cys-37, and Cys-40.

It belongs to the bacterial ribosomal protein bL31 family. Type A subfamily. As to quaternary structure, part of the 50S ribosomal subunit. Requires Zn(2+) as cofactor.

Functionally, binds the 23S rRNA. In Nitrosomonas europaea (strain ATCC 19718 / CIP 103999 / KCTC 2705 / NBRC 14298), this protein is Large ribosomal subunit protein bL31.